The sequence spans 277 residues: Transport and Golgi organization protein 11 (277 aa).

Over 1 to 256 (MVTPQSPTPM…NNEQRTQREK (256 aa)) the chain is Cytoplasmic. Disordered regions lie at residues 124-148 (HFPS…NDLD) and 167-200 (VARM…LNQQ). 4 positions are modified to phosphoserine: Ser127, Ser129, Ser132, and Ser133. Polar residues predominate over residues 174–200 (GNDTNSVESDSQLTTGSASKRSQLNQQ). Thr177 is subject to Phosphothreonine. Residues Ser179, Ser182, and Ser190 each carry the phosphoserine modification. Phosphothreonine is present on residues Thr216 and Thr222. Residues 225 to 253 (EEILYLRRQLAKLNRRVLNIEINNEQRTQ) adopt a coiled-coil conformation. The helical; Anchor for type IV membrane protein transmembrane segment at 257–274 (IVYCLGLAYFVLKTIFWL) threads the bilayer. Residues 275–277 (NRN) lie on the Lumenal side of the membrane.

This sequence belongs to the Tango11 family.

It localises to the endoplasmic reticulum membrane. It is found in the mitochondrion outer membrane. Its subcellular location is the peroxisome. Its function is as follows. May play a role in mitochondrial and peroxisomal fission. In Drosophila melanogaster (Fruit fly), this protein is Transport and Golgi organization protein 11 (Tango11).